A 752-amino-acid polypeptide reads, in one-letter code: GTPase-activating protein rrc-1 (752 aa).

Residues Pro-165 to Asp-244 form the SH3 domain. The region spanning Leu-281–Phe-463 is the Rho-GAP domain. 2 disordered regions span residues Ser-523 to Gln-552 and Arg-582 to Asn-609.

Functions as a GTPase-activating protein (GAP) for ced-10/RAC-1 and CDC42. The protein is GTPase-activating protein rrc-1 of Caenorhabditis briggsae.